We begin with the raw amino-acid sequence, 536 residues long: Phosphoenolpyruvate carboxykinase (ATP) (536 aa).

Substrate contacts are provided by R61, Y195, and K201. Residues K201, H220, and 236 to 244 (GLSGTGKTT) each bind ATP. K201 and H220 together coordinate Mn(2+). Residue D257 participates in Mn(2+) binding. Positions 285, 322, and 447 each coordinate ATP. R322 contacts substrate.

It belongs to the phosphoenolpyruvate carboxykinase (ATP) family. Mn(2+) is required as a cofactor.

The protein resides in the cytoplasm. It catalyses the reaction oxaloacetate + ATP = phosphoenolpyruvate + ADP + CO2. It functions in the pathway carbohydrate biosynthesis; gluconeogenesis. Involved in the gluconeogenesis. Catalyzes the conversion of oxaloacetate (OAA) to phosphoenolpyruvate (PEP) through direct phosphoryl transfer between the nucleoside triphosphate and OAA. The polypeptide is Phosphoenolpyruvate carboxykinase (ATP) (Brucella anthropi (strain ATCC 49188 / DSM 6882 / CCUG 24695 / JCM 21032 / LMG 3331 / NBRC 15819 / NCTC 12168 / Alc 37) (Ochrobactrum anthropi)).